Here is a 123-residue protein sequence, read N- to C-terminus: Unknown 12C protein (123 aa).

An N-terminal signal peptide occupies residues 1–17; the sequence is MMSALFLVLSVSLLVSG.

Post-translationally, contains 6 disulfide bonds. As to expression, expressed in acontia, a specialised envenomation structure laden with batteries of venom-containing nematocysts found only in the superfamily Metridioidea.

The protein localises to the secreted. It localises to the nematocyst. Functionally, cysteine-rich protein with probable toxin activity. The protein is Unknown 12C protein of Calliactis polypus (Hermit crab anemone).